Reading from the N-terminus, the 129-residue chain is NADH-quinone oxidoreductase subunit A (129 aa).

A run of 3 helical transmembrane segments spans residues 14–34 (LAIH…VAAW), 67–87 (FLIA…FAWA), and 95–115 (WLGL…LVYL).

Belongs to the complex I subunit 3 family. In terms of assembly, NDH-1 is composed of 14 different subunits. Subunits NuoA, H, J, K, L, M, N constitute the membrane sector of the complex.

The protein resides in the cell inner membrane. It catalyses the reaction a quinone + NADH + 5 H(+)(in) = a quinol + NAD(+) + 4 H(+)(out). In terms of biological role, NDH-1 shuttles electrons from NADH, via FMN and iron-sulfur (Fe-S) centers, to quinones in the respiratory chain. The immediate electron acceptor for the enzyme in this species is believed to be ubiquinone. Couples the redox reaction to proton translocation (for every two electrons transferred, four hydrogen ions are translocated across the cytoplasmic membrane), and thus conserves the redox energy in a proton gradient. This chain is NADH-quinone oxidoreductase subunit A, found in Rhodopseudomonas palustris (strain BisB5).